The chain runs to 207 residues: SPRY domain-containing protein 4 (207 aa).

The 195-residue stretch at 12-206 (CRWGAKRLGV…THSGLEVPEG (195 aa)) folds into the B30.2/SPRY domain. Lys-53 and Lys-130 each carry N6-acetyllysine. Lys-139 bears the N6-succinyllysine mark.

The polypeptide is SPRY domain-containing protein 4 (SPRYD4) (Homo sapiens (Human)).